We begin with the raw amino-acid sequence, 327 residues long: Phenylalanine--tRNA ligase alpha subunit (327 aa).

Residue Glu-252 participates in Mg(2+) binding.

Belongs to the class-II aminoacyl-tRNA synthetase family. Phe-tRNA synthetase alpha subunit type 1 subfamily. Tetramer of two alpha and two beta subunits. The cofactor is Mg(2+).

It is found in the cytoplasm. The catalysed reaction is tRNA(Phe) + L-phenylalanine + ATP = L-phenylalanyl-tRNA(Phe) + AMP + diphosphate + H(+). The sequence is that of Phenylalanine--tRNA ligase alpha subunit from Vibrio campbellii (strain ATCC BAA-1116).